Reading from the N-terminus, the 66-residue chain is Transmembrane protein B66L (66 aa).

The signal sequence occupies residues 1 to 20; the sequence is MDIKRALILFLLFLVVLSNA. The Extracellular segment spans residues 21–40; it reads FVDYIISNFNHAVTCRKPTY. Residues 41 to 61 form a helical membrane-spanning segment; the sequence is FGIVLQGIFLVILFSIVDYLI. Over 62 to 66 the chain is Cytoplasmic; sequence NENIL.

Belongs to the asfivirus B66L family.

The protein localises to the host membrane. The protein is Transmembrane protein B66L of Ornithodoros (relapsing fever ticks).